A 380-amino-acid chain; its full sequence is Cytochrome b (380 aa).

4 helical membrane-spanning segments follow: residues 33 to 53 (FGSL…FLAM), 77 to 98 (WLIR…YMHI), 113 to 133 (WNIG…GYVL), and 178 to 198 (FFAF…LHLL). Residues His83 and His97 each contribute to the heme b site. Residues His182 and His196 each coordinate heme b. Position 201 (His201) interacts with a ubiquinone. 4 consecutive transmembrane segments (helical) span residues 226 to 246 (YKDL…ALFA), 288 to 308 (LGGV…PILH), 320 to 340 (LTQF…WIGG), and 347 to 367 (FIII…VLSP).

It belongs to the cytochrome b family. In terms of assembly, the cytochrome bc1 complex contains 3 respiratory subunits (MT-CYB, CYC1 and UQCRFS1), 2 core proteins (UQCRC1 and UQCRC2) and probably 6 low-molecular weight proteins. Heme b serves as cofactor.

The protein resides in the mitochondrion inner membrane. In terms of biological role, component of the ubiquinol-cytochrome c reductase complex (complex III or cytochrome b-c1 complex) that is part of the mitochondrial respiratory chain. The b-c1 complex mediates electron transfer from ubiquinol to cytochrome c. Contributes to the generation of a proton gradient across the mitochondrial membrane that is then used for ATP synthesis. The polypeptide is Cytochrome b (mt-cyb) (Oncorhynchus keta (Chum salmon)).